The primary structure comprises 1116 residues: uncharacterized protein (1116 aa).

EF-hand domains lie at 8–43, 42–77, 166–201, and 292–327; these read EEQTAFDQLFKIADKQDIGVITGEEAVPFLEKSGLA, LAPQVLGQIWQIADAENRGFLTFSGFVIAMRLVALA, LSTEILARVWNLVDTHKRGALDIREFNTGMHIINLL, and LPEDVLAQIWDLSDTNSNGKLNIGEFCISLYLIKLK. 3 EH domains span residues 9 to 106, 134 to 224, and 259 to 348; these read EQTA…DSSK, EMTR…AAST, and DLTS…VAPL. Ca(2+)-binding residues include D305, N307, N309, K311, and E316. Disordered regions lie at residues 360–454, 703–774, 812–890, 909–978, 1004–1024, 1044–1066, and 1095–1116; these read PSVV…NSPT, SVNL…ASTV, TSLS…NTSA, PFAT…SPQI, TTTHVQHPNSETIPSSTENQY, SNEVSQPFDFDTANESDNDDDEL, and QAAEIKDDDNSSTDEEEHAGHH. Positions 371-381 are enriched in pro residues; that stretch reads NPNPTLAPNPT. The span at 401–416 shows a compositional bias: polar residues; that stretch reads FSPTLAPQHTSSNATK. Residues 565–707 adopt a coiled-coil conformation; the sequence is KAQTEQVNRE…EDGLKSVNLT (143 aa). Over residues 723–749 the composition is skewed to polar residues; it reads SFTSNGITTDKPTLPDTTSSVPTQHNS. 2 stretches are compositionally biased toward low complexity: residues 755–774 and 812–827; these read NTLRSPSLNSNNSSAHASTV and TSLSVNNSSVNPSLDS. Positions 864 to 890 are enriched in polar residues; the sequence is SKLTGSARNTAEPVENTSAEPIENTSA. Acidic residues predominate over residues 957–969; it reads EIDDDESSSDEEP. Acidic residues-rich tracts occupy residues 1055–1066 and 1104–1116; these read TANESDNDDDEL and NSSTDEEEHAGHH.

The protein resides in the cytoplasm. The protein localises to the cytoskeleton. This is an uncharacterized protein from Schizosaccharomyces pombe (strain 972 / ATCC 24843) (Fission yeast).